The following is a 1097-amino-acid chain: Chitin synthase 2 (1097 aa).

The interval 1-46 (MAGYGHSTAGGFGSGSGSGPPGPQYMLPQYDEGDDPDADATPAGQG) is disordered. Topologically, residues 1 to 748 (MAGYGHSTAG…HVEFLYHLLQ (748 aa)) are extracellular. The span at 8 to 19 (TAGGFGSGSGSG) shows a compositional bias: gly residues. An N-linked (GlcNAc...) asparagine glycan is attached at asparagine 55. Disordered stretches follow at residues 148-217 (SGHG…YPRY) and 259-322 (SSQI…RPPQ). Polar residues predominate over residues 284 to 296 (STTYSSNTGTSAS). A compositionally biased stretch (basic and acidic residues) spans 299–313 (DKFEHYGPIPEEGKH). 2 N-linked (GlcNAc...) asparagine glycosylation sites follow: asparagine 416 and asparagine 424. The helical transmembrane segment at 749 to 769 (LLFTYFSLANFYLAFYFIAGG) threads the bilayer. Over 770–786 (LADPHVDPFNSDGHVAR) the chain is Cytoplasmic. A helical transmembrane segment spans residues 787–807 (IIFNILRYVCVLLICTQFILS). The Extracellular segment spans residues 808-821 (LGNRPQGAKRMYLA). A helical transmembrane segment spans residues 822–842 (SMIIYAVIMVYTTFATIFIVV). The Cytoplasmic segment spans residues 843-865 (RQIQPSQKSDDKPDLELGNNVFT). The helical transmembrane segment at 866–886 (NLIVSVASTLGLYFVMSFLYL) threads the bilayer. At 887-894 (DPWHMFTS) the chain is on the extracellular side. The helical transmembrane segment at 895-915 (AIQYFVLLPSYICTLQIYAFC) threads the bilayer. Over 916 to 993 (NTHDVTWGTK…QDYYKSVRTY (78 aa)) the chain is Cytoplasmic. A helical membrane pass occupies residues 994–1014 (MVVSWMVANATLAMAVSEAYG). At 1015–1025 (DSEIGDNFYLR) the chain is on the extracellular side. A helical membrane pass occupies residues 1026–1046 (FILWAVAALALFRALGSTTFA). Residues 1047-1097 (AINLVSALVEGRVRLRLNMKGFRWIKEKWGDADVKGKFEGLGDRARGLARR) lie on the Cytoplasmic side of the membrane.

This sequence belongs to the chitin synthase family.

The protein resides in the cell membrane. The enzyme catalyses [(1-&gt;4)-N-acetyl-beta-D-glucosaminyl](n) + UDP-N-acetyl-alpha-D-glucosamine = [(1-&gt;4)-N-acetyl-beta-D-glucosaminyl](n+1) + UDP + H(+). In terms of biological role, polymerizes chitin, a structural polymer of the cell wall and septum, by transferring the sugar moiety of UDP-GlcNAc to the non-reducing end of the growing chitin polymer. This is Chitin synthase 2 (chs-2) from Neurospora crassa (strain ATCC 24698 / 74-OR23-1A / CBS 708.71 / DSM 1257 / FGSC 987).